The primary structure comprises 123 residues: Putative acidic leucine-rich nuclear phosphoprotein 32 family member C (123 aa).

4 LRR repeats span residues 43 to 64 (ELEF…PKLN), 65 to 87 (KLKK…AEKC), 89 to 110 (NLKH…ELLK), and 114 to 123 (NLKSLDLFNC).

The protein belongs to the ANP32 family.

The protein is Putative acidic leucine-rich nuclear phosphoprotein 32 family member C (Anp32c) of Mus musculus (Mouse).